The chain runs to 481 residues: Abl interactor 1 (481 aa).

Ala-2 is modified (N-acetylalanine). The required for binding to WASF1 stretch occupies residues 18 to 79 (ALIESYQNLT…NNVLQLLDIQ (62 aa)). Residues 45 to 107 (KALEETKAYT…DIHKEKVARR (63 aa)) enclose the t-SNARE coiled-coil homology domain. Tyr-53 is modified (phosphotyrosine). Residues 158–285 (AKHGNNQPAR…PGAAPGSQYG (128 aa)) are disordered. Positions 161–175 (GNNQPARTGTLSRTN) are enriched in polar residues. A phosphothreonine mark is found at Thr-174 and Thr-178. Phosphoserine is present on residues Ser-183 and Ser-187. Tyr-213 carries the post-translational modification Phosphotyrosine. At Thr-215 the chain carries Phosphothreonine. Phosphoserine occurs at positions 216, 222, and 225. The segment covering 222–235 (SQHSPGRTASLNQR) has biased composition (polar residues). 2 stretches are compositionally biased toward low complexity: residues 248 to 258 (SRENSGSSSIG) and 272 to 282 (GPAAPGAAPGS). Residues Ser-292 and Ser-296 each carry the phosphoserine modification. Disordered regions lie at residues 318-348 (AQPHVNGGPLYSQNSISVAPPPPPMPQLTPQ) and 361-392 (NIADSPTPPPPPPPDDIPMFDDSPPPPPPPPV). 2 stretches are compositionally biased toward pro residues: residues 366 to 376 (PTPPPPPPPDD) and 383 to 392 (SPPPPPPPPV). The region spanning 419-478 (NYIEKVVAIYDYTKDKDDELSFKEGAIIYVIKKNDDGWFEGVCNRVTGLFPGNYVESIMH) is the SH3 domain. A Phosphotyrosine modification is found at Tyr-428. Ser-439 bears the Phosphoserine mark. The residue at position 480 (Thr-480) is a Phosphothreonine.

Belongs to the ABI family. As to quaternary structure, interacts with ENAH, Abelson murine leukemia virus V-ABL, ABL1, STX1A, SNAP25, VAMP2, and through its N-terminus with WASF1. Part of a complex consisting of ABI1, STX1A and SNAP25. Part of a complex consisting of ABI1, EPS8 and SOS1. Interacts with EPS8, SOS1, SOS2, GRB2, SPTA1, and the first SH3 domain of NCK1. Component of the WAVE2 complex composed of ABI1, CYFIP1/SRA1, NCKAP1/NAP1 (NCKAP1l/HEM1 in hematopoietic cells) and WASF2/WAVE2. Interacts (via SH3 domain) with SHANK2 and SHANK3, but not SHANK1; the interaction is direct. Interacts with the heterodimer MYC:MAX; the interaction may enhance MYC:MAX transcriptional activity. Interacts with FNBP1L (via the SH3 domain), WASF2, and CDC42, but only in the presence of FNBP1L. Phosphorylated on tyrosine residues after serum stimulation or induction by v-Abl. Seems to be phosphorylated at Tyr-53 by ABL1, required for nuclear but not for synaptic localization. In terms of tissue distribution, widely expressed with highest levels in bone marrow, spleen, brain, testes, and embryonic brain. In adult brain prominently expressed in the neocortex, hippocampus and dentate gyrus.

The protein localises to the cytoplasm. Its subcellular location is the nucleus. It localises to the cell projection. It is found in the lamellipodium. The protein resides in the filopodium. The protein localises to the growth cone. Its subcellular location is the postsynaptic density. It localises to the cytoskeleton. Functionally, may act in negative regulation of cell growth and transformation by interacting with nonreceptor tyrosine kinases ABL1 and/or ABL2. In vitro, at least isoform 2 and isoform 4 suppress the transforming activity of Abelson murine leukemia virus (v-Abl) after overexpression in fibroblasts. May play a role in regulation EGF-induced Erk pathway activation. Involved in cytoskeletal reorganization and EGFR signaling. Together with EPS8 participates in transduction of signals from Ras to Rac. In vitro, a trimeric complex of ABI1, EPS8 and SOS1 exhibits Rac specific guanine nucleotide exchange factor (GEF) activity and ABI1 seems to act as an adapter in the complex. Regulates ABL1/c-Abl-mediated phosphorylation of ENAH. Recruits WASF1 to lamellipodia and there seems to regulate WASF1 protein level. In brain, seems to regulate the dendritic outgrowth and branching as well as to determine the shape and number of synaptic contacts of developing neurons. The polypeptide is Abl interactor 1 (Mus musculus (Mouse)).